Here is a 41-residue protein sequence, read N- to C-terminus: Large ribosomal subunit protein bL36 (41 aa).

It belongs to the bacterial ribosomal protein bL36 family.

This chain is Large ribosomal subunit protein bL36, found in Hydrogenovibrio crunogenus (strain DSM 25203 / XCL-2) (Thiomicrospira crunogena).